Consider the following 241-residue polypeptide: UPF0280 protein MK0206 (241 aa).

This sequence belongs to the UPF0280 family.

The polypeptide is UPF0280 protein MK0206 (Methanopyrus kandleri (strain AV19 / DSM 6324 / JCM 9639 / NBRC 100938)).